The primary structure comprises 331 residues: Tryptophan--tRNA ligase 1 (331 aa).

ATP contacts are provided by residues 9–11 (KPT) and 17–18 (GN). The 'HIGH' region motif lies at 10–18 (PTGHLTLGN). An L-tryptophan-binding site is contributed by aspartate 137. Residues 149–151 (GDD), valine 188, and 197–201 (KMGKS) each bind ATP. Positions 197–201 (KMGKS) match the 'KMSKS' region motif.

Belongs to the class-I aminoacyl-tRNA synthetase family. As to quaternary structure, homodimer.

It is found in the cytoplasm. The enzyme catalyses tRNA(Trp) + L-tryptophan + ATP = L-tryptophyl-tRNA(Trp) + AMP + diphosphate + H(+). Catalyzes the attachment of tryptophan to tRNA(Trp). The chain is Tryptophan--tRNA ligase 1 from Streptomyces avermitilis (strain ATCC 31267 / DSM 46492 / JCM 5070 / NBRC 14893 / NCIMB 12804 / NRRL 8165 / MA-4680).